The primary structure comprises 906 residues: Protein translocase subunit SecA (906 aa).

ATP is bound by residues Gln89, 107–111 (GEGKT), and Asp502. Positions 829–898 (EAPPEPELPP…ACPCGSGKKY (70 aa)) are disordered. Basic and acidic residues predominate over residues 858 to 877 (WSDHQHDERNVPAAERDPAD). Residues Cys890, Cys892, Cys901, and His902 each coordinate Zn(2+).

This sequence belongs to the SecA family. In terms of assembly, monomer and homodimer. Part of the essential Sec protein translocation apparatus which comprises SecA, SecYEG and auxiliary proteins SecDF-YajC and YidC. Requires Zn(2+) as cofactor.

It is found in the cell inner membrane. The protein localises to the cytoplasm. The catalysed reaction is ATP + H2O + cellular proteinSide 1 = ADP + phosphate + cellular proteinSide 2.. Its function is as follows. Part of the Sec protein translocase complex. Interacts with the SecYEG preprotein conducting channel. Has a central role in coupling the hydrolysis of ATP to the transfer of proteins into and across the cell membrane, serving both as a receptor for the preprotein-SecB complex and as an ATP-driven molecular motor driving the stepwise translocation of polypeptide chains across the membrane. The protein is Protein translocase subunit SecA of Brucella anthropi (strain ATCC 49188 / DSM 6882 / CCUG 24695 / JCM 21032 / LMG 3331 / NBRC 15819 / NCTC 12168 / Alc 37) (Ochrobactrum anthropi).